We begin with the raw amino-acid sequence, 821 residues long: Fibroblast growth factor receptor 2 (821 aa).

The signal sequence occupies residues 1-21; sequence MVSWGRFICLVLVTMATLSLA. The Extracellular segment spans residues 22 to 377; the sequence is RPSFSLVEDT…EITASPDYLE (356 aa). Positions 25 to 125 constitute an Ig-like C2-type 1 domain; that stretch reads FSLVEDTTLE…ETWIFMVNVT (101 aa). An intrachain disulfide couples Cys-62 to Cys-107. Residues Asn-83 and Asn-123 are each glycosylated (N-linked (GlcNAc...) asparagine). The tract at residues 129 to 151 is disordered; sequence SSGDDEDDTDSSEDVVSENRSNQ. Acidic residues predominate over residues 131 to 144; the sequence is GDDEDDTDSSEDVV. Asn-147 carries an N-linked (GlcNAc...) asparagine glycan. 2 Ig-like C2-type domains span residues 154–247 and 256–358; these read PYWT…YHLD and PILQ…AWLT. The segment at 161 to 178 is heparin-binding; that stretch reads KMEKRLHACPAANTVKFR. Cys-179 and Cys-231 are disulfide-bonded. Residues Asn-228, Asn-241, Asn-265, Asn-297, Asn-318, and Asn-331 are each glycosylated (N-linked (GlcNAc...) asparagine). Residues Cys-278 and Cys-342 are joined by a disulfide bond. Residues 378 to 398 form a helical membrane-spanning segment; that stretch reads IAIYCIGVFLIACMVVTVIFC. Residues 399-821 lie on the Cytoplasmic side of the membrane; that stretch reads RMKTTTKKPD…YPHINGSVKT (423 aa). Tyr-466 carries the post-translational modification Phosphotyrosine; by autocatalysis. The 290-residue stretch at 481 to 770 folds into the Protein kinase domain; the sequence is LTLGKPLGEG…LTLTTNEEYL (290 aa). Residues 487–495, Lys-517, 565–567, and Asn-571 each bind ATP; these read LGEGCFGQV and EYA. A phosphotyrosine; by autocatalysis mark is found at Tyr-586 and Tyr-588. Asp-626 (proton acceptor) is an active-site residue. Phosphotyrosine; by autocatalysis is present on residues Tyr-656, Tyr-657, and Tyr-769. Position 780 is a phosphoserine (Ser-780).

This sequence belongs to the protein kinase superfamily. Tyr protein kinase family. Fibroblast growth factor receptor subfamily. Monomer. Homodimer after ligand binding. Interacts predominantly with FGF1 and FGF2, but can also interact with FGF3, FGF4, FGF6, FGF7, FGF8, FGF9, FGF10, FGF17, FGF18 and FGF22 (in vitro). Ligand specificity is determined by tissue-specific expression of isoforms, and differences in the third Ig-like domain are crucial for ligand specificity. Affinity for fibroblast growth factors (FGFs) is increased by heparan sulfate glycosaminoglycans that function as coreceptors. Likewise, KLB increases the affinity for FGF19 and FGF21. Interacts with PLCG1. Interacts with GRB2 and PAK4. Interacts with FLRT2. In terms of processing, autophosphorylated. Binding of FGF family members together with heparan sulfate proteoglycan or heparin promotes receptor dimerization and autophosphorylation on tyrosine residues. Autophosphorylation occurs in trans between the two FGFR molecules present in the dimer. Post-translationally, N-glycosylated in the endoplasmic reticulum. The N-glycan chains undergo further maturation to an Endo H-resistant form in the Golgi apparatus. Ubiquitinated. FGFR2 is rapidly ubiquitinated after autophosphorylation, leading to internalization and degradation. Subject to degradation both in lysosomes and by the proteasome.

Its subcellular location is the cell membrane. It is found in the golgi apparatus. The protein localises to the cytoplasmic vesicle. The enzyme catalyses L-tyrosyl-[protein] + ATP = O-phospho-L-tyrosyl-[protein] + ADP + H(+). Its activity is regulated as follows. Present in an inactive conformation in the absence of bound ligand. Ligand binding leads to dimerization and activation by autophosphorylation on tyrosine residues. Tyrosine-protein kinase that acts as a cell-surface receptor for fibroblast growth factors and plays an essential role in the regulation of cell proliferation, differentiation, migration and apoptosis, and in the regulation of embryonic development. Required for normal embryonic patterning, trophoblast function, limb bud development, lung morphogenesis, osteogenesis and skin development. Plays an essential role in the regulation of osteoblast differentiation, proliferation and apoptosis, and is required for normal skeleton development. Promotes cell proliferation in keratinocytes and immature osteoblasts, but promotes apoptosis in differentiated osteoblasts. Phosphorylates PLCG1, FRS2 and PAK4. Ligand binding leads to the activation of several signaling cascades. Activation of PLCG1 leads to the production of the cellular signaling molecules diacylglycerol and inositol 1,4,5-trisphosphate. Phosphorylation of FRS2 triggers recruitment of GRB2, GAB1, PIK3R1 and SOS1, and mediates activation of RAS, MAPK1/ERK2, MAPK3/ERK1 and the MAP kinase signaling pathway, as well as of the AKT1 signaling pathway. FGFR2 signaling is down-regulated by ubiquitination, internalization and degradation. Mutations that lead to constitutive kinase activation or impair normal FGFR2 maturation, internalization and degradation lead to aberrant signaling. Over-expressed FGFR2 promotes activation of STAT1. This chain is Fibroblast growth factor receptor 2 (Fgfr2), found in Mus musculus (Mouse).